The chain runs to 414 residues: Ciliary microtubule-associated protein 2 (414 aa).

This is Ciliary microtubule-associated protein 2 (Cimap2) from Mus musculus (Mouse).